The primary structure comprises 235 residues: Futalosine hydrolase (235 aa).

Belongs to the PNP/UDP phosphorylase family. Futalosine hydrolase subfamily.

The enzyme catalyses futalosine + H2O = dehypoxanthine futalosine + hypoxanthine. It participates in quinol/quinone metabolism; menaquinone biosynthesis. In terms of biological role, catalyzes the hydrolysis of futalosine (FL) to dehypoxanthine futalosine (DHFL) and hypoxanthine, a step in the biosynthesis of menaquinone (MK, vitamin K2). Does not accept aminodeoxyfutalosine (AFL) as a substrate. The sequence is that of Futalosine hydrolase from Streptomyces coelicolor (strain ATCC BAA-471 / A3(2) / M145).